The sequence spans 124 residues: MQYQGRSKRSKTGARLRPRSKKSKSELGREPTETTVGEPRFRTVDVRGDAEKVRVLSTNVVNVATDSGAERATIEDVSANDANPNYARRNIITKGAIIETDAGTARVTSRPGQDGQVNATRVDE.

Residues 1–22 (MQYQGRSKRSKTGARLRPRSKK) show a composition bias toward basic residues. 2 disordered regions span residues 1–40 (MQYQGRSKRSKTGARLRPRSKKSKSELGREPTETTVGEPR) and 102–124 (AGTARVTSRPGQDGQVNATRVDE). Over residues 23–32 (SKSELGREPT) the composition is skewed to basic and acidic residues. Residues 106-124 (RVTSRPGQDGQVNATRVDE) are compositionally biased toward polar residues.

Belongs to the eukaryotic ribosomal protein eS8 family. As to quaternary structure, part of the 30S ribosomal subunit.

This Halobacterium salinarum (strain ATCC 29341 / DSM 671 / R1) protein is Small ribosomal subunit protein eS8.